The following is a 502-amino-acid chain: Cytochrome P450 CYP94D109 (502 aa).

Residues 3–23 (SLSLIFISFITLIVFLVVSAS) form a helical membrane-spanning segment. Residue Cys-437 coordinates heme.

The protein belongs to the cytochrome P450 family. In terms of tissue distribution, mainly expressed in leaves and, at low levels, in roots, fruits and stems.

The protein localises to the membrane. The protein operates within steroid metabolism; cholesterol metabolism. Involved in the biosynthesis of spiroketal steroid and saponin natural products from cholesterol such as diosgenin and analogs (e.g. furostanol and spirostanol), plant defense compounds used as main precursors for the industrial production of steroid hormones. During the 5,6-spiroketalization of cholesterol, may catalyze the 27-monohydroxylation of furostanol-type steroid to an intermediate product that undergoes a stereospecific formation of the terminal heterocycle to yield diosgenin. The polypeptide is Cytochrome P450 CYP94D109 (Paris polyphylla (Daiswa polyphylla)).